Reading from the N-terminus, the 233-residue chain is Large ribosomal subunit protein uL1 (233 aa).

This sequence belongs to the universal ribosomal protein uL1 family. Part of the 50S ribosomal subunit.

In terms of biological role, binds directly to 23S rRNA. The L1 stalk is quite mobile in the ribosome, and is involved in E site tRNA release. Protein L1 is also a translational repressor protein, it controls the translation of the L11 operon by binding to its mRNA. The protein is Large ribosomal subunit protein uL1 of Brucella canis (strain ATCC 23365 / NCTC 10854 / RM-666).